A 360-amino-acid polypeptide reads, in one-letter code: Peptide chain release factor 1 (360 aa).

Glutamine 237 carries the N5-methylglutamine modification.

It belongs to the prokaryotic/mitochondrial release factor family. Methylated by PrmC. Methylation increases the termination efficiency of RF1.

It localises to the cytoplasm. Functionally, peptide chain release factor 1 directs the termination of translation in response to the peptide chain termination codons UAG and UAA. In Cellvibrio japonicus (strain Ueda107) (Pseudomonas fluorescens subsp. cellulosa), this protein is Peptide chain release factor 1.